A 155-amino-acid chain; its full sequence is V-type proton ATPase 16 kDa proteolipid subunit c (155 aa).

Topologically, residues 1 to 10 (MSESKSGPEY) are lumenal. The chain crosses the membrane as a helical span at residues 11–33 (ASFFAVMGASAAMVFSALGAAYG). At 34–55 (TAKSGTGIAAMSVMRPEQIMKS) the chain is on the cytoplasmic side. The chain crosses the membrane as a helical span at residues 56 to 76 (IIPVVMAGIIAIYGLVVAVLI). The Lumenal portion of the chain corresponds to 77-92 (ANSLNDDISLYKSFLQ). Residues 93-114 (LGAGLSVGLSGLAAGFAIGIVG) traverse the membrane as a helical segment. Residues 115–131 (DAGVRGTAQQPRLFVGM) are Cytoplasmic-facing. The helical transmembrane segment at 132-152 (ILILIFAEVLGLYGLIVALIL) threads the bilayer. Topologically, residues 153–155 (STK) are lumenal.

Belongs to the V-ATPase proteolipid subunit family. V-ATPase is a heteromultimeric enzyme made up of two complexes: the ATP-hydrolytic V1 complex and the proton translocation V0 complex. The V1 complex consists of three catalytic AB heterodimers that form a heterohexamer, three peripheral stalks each consisting of EG heterodimers, one central rotor including subunits D and F, and the regulatory subunits C and H. The proton translocation complex V0 consists of the proton transport subunit a, a ring of proteolipid subunits c9c'', rotary subunit d, subunits e and f, and the accessory subunits ATP6AP1/Ac45 and ATP6AP2/PRR. Interacts with the V0 complex V-ATPase subunit a4 ATP6V0A4. Interacts with LASS2. Interacts with RNF182; this interaction leads to ubiquitination and degradation via the proteasome pathway. In terms of assembly, (Microbial infection) Interacts with HTLV-1 accessory protein p12I. In terms of processing, ubiquitinated by RNF182, leading to its degradation via the ubiquitin-proteasome pathway.

The protein localises to the cytoplasmic vesicle. Its subcellular location is the clathrin-coated vesicle membrane. It localises to the secretory vesicle. It is found in the synaptic vesicle membrane. Its function is as follows. Proton-conducting pore forming subunit of the V0 complex of vacuolar(H+)-ATPase (V-ATPase), a multisubunit enzyme composed of a peripheral complex (V1) that hydrolyzes ATP and a membrane integral complex (V0) that translocates protons. V-ATPase is responsible for acidifying and maintaining the pH of intracellular compartments, and in some cell types, it is targeted to the plasma membrane, where it is responsible for acidifying the extracellular environment. In Homo sapiens (Human), this protein is V-type proton ATPase 16 kDa proteolipid subunit c (ATP6V0C).